Consider the following 361-residue polypeptide: Ribosomal RNA small subunit methyltransferase H (361 aa).

S-adenosyl-L-methionine contacts are provided by residues glycine 54–histidine 56, aspartate 74, tyrosine 101, aspartate 122, and glutamine 129. The tract at residues alanine 318 to alanine 361 is disordered. Basic and acidic residues predominate over residues tyrosine 348 to alanine 361.

It belongs to the methyltransferase superfamily. RsmH family.

It localises to the cytoplasm. It catalyses the reaction cytidine(1402) in 16S rRNA + S-adenosyl-L-methionine = N(4)-methylcytidine(1402) in 16S rRNA + S-adenosyl-L-homocysteine + H(+). Functionally, specifically methylates the N4 position of cytidine in position 1402 (C1402) of 16S rRNA. This Nitratidesulfovibrio vulgaris (strain DSM 19637 / Miyazaki F) (Desulfovibrio vulgaris) protein is Ribosomal RNA small subunit methyltransferase H.